Reading from the N-terminus, the 54-residue chain is Ovomucoid (54 aa).

The region spanning 4–54 (VDCSDYPKPACSLDYMPLCGSDSKTYSNKCNFCNAVVDSNGTLTLSHFEKC) is the Kazal-like domain. Intrachain disulfides connect Cys6–Cys36, Cys14–Cys33, and Cys22–Cys54. Asn43 carries an N-linked (GlcNAc...) asparagine glycan.

Its subcellular location is the secreted. The chain is Ovomucoid from Chroicocephalus ridibundus (Black-headed gull).